We begin with the raw amino-acid sequence, 543 residues long: Phosphoribosylaminoimidazole carboxylase (543 aa).

Residues 110-297 (KEHLIKNGIA…QFEAHVRAIT (188 aa)) form the ATP-grasp domain. 137–192 (GAKYGFPYMLKSRTMAYDGRGNFVVKDKSYIPEALKVLDDRPLYAEKWAPFSKELA) contacts ATP.

In the C-terminal section; belongs to the AIR carboxylase family. Class I subfamily.

It catalyses the reaction 5-amino-1-(5-phospho-D-ribosyl)imidazole-4-carboxylate + H(+) = 5-amino-1-(5-phospho-beta-D-ribosyl)imidazole + CO2. The protein operates within purine metabolism; IMP biosynthesis via de novo pathway; 5-amino-1-(5-phospho-D-ribosyl)imidazole-4-carboxylate from 5-amino-1-(5-phospho-D-ribosyl)imidazole (carboxylase route): step 1/1. In Ogataea methanolica (Yeast), this protein is Phosphoribosylaminoimidazole carboxylase (ADE1).